The chain runs to 522 residues: Type-2 serine--tRNA ligase (522 aa).

An L-serine-binding site is contributed by A319. C321 contributes to the Zn(2+) binding site. R350 serves as a coordination point for L-serine. ATP contacts are provided by residues R350–E352 and R361–V362. Residue R367–E369 participates in L-serine binding. E369 and C476 together coordinate Zn(2+). Residue R483 participates in ATP binding.

Belongs to the class-II aminoacyl-tRNA synthetase family. Type-2 seryl-tRNA synthetase subfamily. In terms of assembly, homodimer. Zn(2+) is required as a cofactor.

It localises to the cytoplasm. It carries out the reaction tRNA(Ser) + L-serine + ATP = L-seryl-tRNA(Ser) + AMP + diphosphate + H(+). The enzyme catalyses tRNA(Sec) + L-serine + ATP = L-seryl-tRNA(Sec) + AMP + diphosphate + H(+). Its pathway is aminoacyl-tRNA biosynthesis; selenocysteinyl-tRNA(Sec) biosynthesis; L-seryl-tRNA(Sec) from L-serine and tRNA(Sec): step 1/1. Functionally, catalyzes the attachment of serine to tRNA(Ser). Is also able to aminoacylate tRNA(Sec) with serine, to form the misacylated tRNA L-seryl-tRNA(Sec), which will be further converted into selenocysteinyl-tRNA(Sec). This Methanococcus aeolicus (strain ATCC BAA-1280 / DSM 17508 / OCM 812 / Nankai-3) protein is Type-2 serine--tRNA ligase (serS).